We begin with the raw amino-acid sequence, 482 residues long: uncharacterized protein (482 aa).

2 stretches are compositionally biased toward low complexity: residues 24–86 (SPNS…AQQQ) and 312–339 (TDSL…SQSI). 2 disordered regions span residues 24 to 88 (SPNS…QQHY) and 307 to 376 (LHSQ…LIGK). The segment covering 342 to 363 (EEEEDGGEDEEEEGGEDNDNES) has biased composition (acidic residues).

This is an uncharacterized protein from Dictyostelium discoideum (Social amoeba).